Reading from the N-terminus, the 269-residue chain is MTKVIIAGASGRMGQRVAHMVEAHPELEYAAAFEAAGNPAIGKDIGRIVFGEENGVIVGEGLESVIADGDVIIDFTFHTATMEFARIAAKHGKAMVIGTTGLSVDELAELKDLSASFPCVQAPNMSVCVNVLFKLAKKTAAILGDDYDIEILEAHHNKKKDAPSGTALKLAEMAAEGVGRNLAEVGVYERNGIIGERDPKEIGIQTLRAADIVGEHTIYFAGAGERLEISHRAHSRDHFAKGAATAAAWLVGRENGIYDMFDVLGLQDL.

Residues 8-13 (GASGRM), glutamate 34, 98-100 (GTT), and 122-125 (APNM) each bind NAD(+). Histidine 155 serves as the catalytic Proton donor/acceptor. Histidine 156 provides a ligand contact to (S)-2,3,4,5-tetrahydrodipicolinate. Catalysis depends on lysine 159, which acts as the Proton donor. A (S)-2,3,4,5-tetrahydrodipicolinate-binding site is contributed by 165 to 166 (GT).

Belongs to the DapB family.

The protein resides in the cytoplasm. The catalysed reaction is (S)-2,3,4,5-tetrahydrodipicolinate + NAD(+) + H2O = (2S,4S)-4-hydroxy-2,3,4,5-tetrahydrodipicolinate + NADH + H(+). It carries out the reaction (S)-2,3,4,5-tetrahydrodipicolinate + NADP(+) + H2O = (2S,4S)-4-hydroxy-2,3,4,5-tetrahydrodipicolinate + NADPH + H(+). Its pathway is amino-acid biosynthesis; L-lysine biosynthesis via DAP pathway; (S)-tetrahydrodipicolinate from L-aspartate: step 4/4. In terms of biological role, catalyzes the conversion of 4-hydroxy-tetrahydrodipicolinate (HTPA) to tetrahydrodipicolinate. This Desulfotalea psychrophila (strain LSv54 / DSM 12343) protein is 4-hydroxy-tetrahydrodipicolinate reductase.